The following is a 113-amino-acid chain: Endoribonuclease SymE (113 aa).

Residues 29–74 form the SpoVT-AbrB domain; the sequence is SRYPDYSRIPAITLKGQWLEAAGFATGTAVDVKVMEGCIVLTAQPP.

It belongs to the SymE family.

The protein resides in the cytoplasm. Functionally, involved in the degradation and recycling of damaged RNA. It is itself a target for degradation by the ATP-dependent protease Lon. This Escherichia coli (strain K12 / MC4100 / BW2952) protein is Endoribonuclease SymE.